We begin with the raw amino-acid sequence, 424 residues long: Otefin (424 aa).

The 30-residue stretch at 1-30 folds into the LEM domain; sequence MADVDDFDSLSNAELRAKMLAQGLPNIPVT. Residues 1–50 form a required for binding to Med and germline stem cell maintenance region; sequence MADVDDFDSLSNAELRAKMLAQGLPNIPVTDSSRKVLVKRLRASIGGQAS. The tract at residues 42 to 186 is disordered; the sequence is RASIGGQASP…SSKRADREEN (145 aa). 3 positions are modified to phosphoserine: Ser-44, Ser-50, and Ser-54. At Thr-63 the chain carries Phosphothreonine. Low complexity predominate over residues 65 to 80; the sequence is APAPGAPSAPAAASTP. The short motif at 92 to 99 is the Nuclear localization signal element; that stretch reads ATKARRTI. Basic and acidic residues predominate over residues 103–133; the sequence is EAKEPVRRLPEEAIRRRPDEADRLRSEEPVA. Residue Ser-152 is modified to Phosphoserine. Residues 157 to 170 show a composition bias toward basic and acidic residues; sequence SERKVVEPLRKPET. Residues Ser-192 and Ser-198 each carry the phosphoserine modification. The tract at residues 259–278 is disordered; the sequence is PSVPSARAQTTSSTRSYDYA. Residues 262 to 274 are compositionally biased toward low complexity; the sequence is PSARAQTTSSTRS. The required for binding to Med stretch occupies residues 271–400; that stretch reads STRSYDYASN…NRWLNSLEQK (130 aa). Ser-321 carries the post-translational modification Phosphoserine. Thr-324 carries the post-translational modification Phosphothreonine. Ser-326 carries the post-translational modification Phosphoserine. At Thr-358 the chain carries Phosphothreonine. 2 positions are modified to phosphoserine: Ser-378 and Ser-385. The interval 400–424 is essential for nuclear membrane localization and germline stem cell maintenance; the sequence is KYHIKSKLFIVLLVLLLIGVYYIFY. Residues 406–424 form an essential for nuclear membrane localization region; the sequence is KLFIVLLVLLLIGVYYIFY.

In terms of assembly, interacts with Med. Interacts with Lam. Interacts with aurA, alphaTub84B, gammaTub23C and gammaTub37C. Interacts with Nemp. Post-translationally, phosphorylation at Thr-63 by aurA may be required for exit from mitosis. May be phosphorylated by Cdk1 and Pka-C1. Expressed in all cell types of the germarium and testis. Expressed in nurse cells, follicle cells and oocytes.

Its subcellular location is the nucleus inner membrane. The protein localises to the nucleus. It is found in the nucleoplasm. The protein resides in the cytoplasm. It localises to the chromosome. Its subcellular location is the cytoskeleton. The protein localises to the spindle pole. It is found in the microtubule organizing center. The protein resides in the centrosome. Its function is as follows. Inner nuclear membrane protein. Involved in the attachment of membrane vesicles to chromatin during nuclear assembly, and is probably required for centrosome maturation and cell cycle progression during mitosis. Essential for differentiation of certain tissues and the maintenance of progenitor cell populations. Required for the differentiation and maintenance of male and female germline stem cells (GSCs), as well as the maintenance of somatic cells in the GSC niche. This role is likely to be independent of the BMP (Dpp) pathway that negatively regulates bam transcription during GSC differentiation. During development, plays essential and redundant functions with the other LEM domain proteins; bocks and MAN1. Also has a redundant but important role with bocks during larval development. The chain is Otefin from Drosophila melanogaster (Fruit fly).